The primary structure comprises 220 residues: 7-cyano-7-deazaguanine synthase (220 aa).

10-20 contributes to the ATP binding site; sequence FSGGQDSTTCL. 4 residues coordinate Zn(2+): cysteine 186, cysteine 195, cysteine 198, and cysteine 201.

The protein belongs to the QueC family. In terms of assembly, homodimer. Zn(2+) serves as cofactor.

The catalysed reaction is 7-carboxy-7-deazaguanine + NH4(+) + ATP = 7-cyano-7-deazaguanine + ADP + phosphate + H2O + H(+). It participates in purine metabolism; 7-cyano-7-deazaguanine biosynthesis. Functionally, catalyzes the ATP-dependent conversion of 7-carboxy-7-deazaguanine (CDG) to 7-cyano-7-deazaguanine (preQ(0)). The chain is 7-cyano-7-deazaguanine synthase from Bacillus cereus (strain ATCC 14579 / DSM 31 / CCUG 7414 / JCM 2152 / NBRC 15305 / NCIMB 9373 / NCTC 2599 / NRRL B-3711).